The chain runs to 336 residues: MNTLRTAMLLAAMTALFMGVGFLIGGSGGMMIALLIAAGTNLFSYWNADKMVLSMNRAVEVDEKNAPEYYAIVQALAKQAGLPMPRTYLIDNPQPNAFATGRNPQNAAVAASTGLLQRLTHEEVAAVMAHELAHVQHRDTLTMTIVATFAGAISMLGNFAFFLGGNRDNNPFGFVGVLAAMIVAPFAAMIVQMAVSRTREYEADRRGAEICGHPLWLASALDKIARGAERIPNPDAERNPAMAHLFIINPLHGERMDNLFSTHPSTDNRIAALQEMAQQMAGGTQAAPRPTPRQAGEQQPSGPWGQAPQAEQPAEPERPKANPWGRNPTGPKGRWS.

Transmembrane regions (helical) follow at residues 7–24 (AMLLAAMTALFMGVGFLI) and 29–48 (GMMIALLIAAGTNLFSYWNA). Residue histidine 130 participates in Zn(2+) binding. The active site involves glutamate 131. Histidine 134 lines the Zn(2+) pocket. Helical transmembrane passes span 145 to 165 (IVATFAGAISMLGNFAFFLGG) and 171 to 191 (PFGFVGVLAAMIVAPFAAMIV). Zn(2+) is bound at residue glutamate 200. Over residues 278–287 (QQMAGGTQAA) the composition is skewed to low complexity. Positions 278 to 336 (QQMAGGTQAAPRPTPRQAGEQQPSGPWGQAPQAEQPAEPERPKANPWGRNPTGPKGRWS) are disordered.

This sequence belongs to the peptidase M48B family. The cofactor is Zn(2+).

It localises to the cell inner membrane. The polypeptide is Protease HtpX homolog (Mesorhizobium japonicum (strain LMG 29417 / CECT 9101 / MAFF 303099) (Mesorhizobium loti (strain MAFF 303099))).